The following is a 135-amino-acid chain: CDGSH iron-sulfur domain-containing protein 2B (135 aa).

Residues 1-37 (MMLESLARVFKVQLPAYLKRLPIPDSIAGFIRLTVLE) lie on the Lumenal side of the membrane. The helical transmembrane segment at 38–60 (WLRLLPFLGVLALLGYLAIRPFL) threads the bilayer. At 61–135 (PKKKQQKDSL…GPLILKKKEV (75 aa)) the chain is on the cytoplasmic side. Positions 99, 101, 110, and 114 each coordinate [2Fe-2S] cluster.

The protein belongs to the CISD protein family. CISD2 subfamily. As to quaternary structure, homodimer. Requires [2Fe-2S] cluster as cofactor.

Its subcellular location is the endoplasmic reticulum membrane. It is found in the mitochondrion outer membrane. Functionally, regulator of autophagy that contributes to antagonize becn1-mediated cellular autophagy at the endoplasmic reticulum. Participates in the interaction of bcl2 with becn1 and is required for bcl2-mediated depression of endoplasmic reticulum Ca(2+) stores during autophagy. This Xenopus laevis (African clawed frog) protein is CDGSH iron-sulfur domain-containing protein 2B (cisd2-b).